The chain runs to 370 residues: Mitogen-activated protein kinase 3 (370 aa).

The region spanning 32 to 319 is the Protein kinase domain; it reads YVPIKPIGRG…VTEALEHPYM (288 aa). ATP-binding positions include 38–46 and Lys-61; that span reads IGRGAYGIV. The active-site Proton acceptor is Asp-158. Thr-191 carries the phosphothreonine modification. Positions 191 to 193 match the TXY motif; the sequence is TEY. Position 193 is a phosphotyrosine (Tyr-193).

Belongs to the protein kinase superfamily. CMGC Ser/Thr protein kinase family. MAP kinase subfamily. Dually phosphorylated on Thr-191 and Tyr-193, which activates the enzyme.

The enzyme catalyses L-seryl-[protein] + ATP = O-phospho-L-seryl-[protein] + ADP + H(+). It carries out the reaction L-threonyl-[protein] + ATP = O-phospho-L-threonyl-[protein] + ADP + H(+). With respect to regulation, activated by threonine and tyrosine phosphorylation. The polypeptide is Mitogen-activated protein kinase 3 (MPK3) (Oryza sativa subsp. japonica (Rice)).